The primary structure comprises 378 residues: Protein RecA (378 aa).

The interval 1 to 20 is disordered; that stretch reads MAAKKDKSVPDSKITDKEGK. 80–87 lines the ATP pocket; it reads GAESSGKT. Residues 344–378 are disordered; it reads GPVDKKKKKSKKEASSDDTDDENLEIDDAIDENND. Positions 359-378 are enriched in acidic residues; the sequence is SDDTDDENLEIDDAIDENND.

The protein belongs to the RecA family.

The protein resides in the cytoplasm. In terms of biological role, can catalyze the hydrolysis of ATP in the presence of single-stranded DNA, the ATP-dependent uptake of single-stranded DNA by duplex DNA, and the ATP-dependent hybridization of homologous single-stranded DNAs. It interacts with LexA causing its activation and leading to its autocatalytic cleavage. The sequence is that of Protein RecA from Fusobacterium nucleatum subsp. nucleatum (strain ATCC 25586 / DSM 15643 / BCRC 10681 / CIP 101130 / JCM 8532 / KCTC 2640 / LMG 13131 / VPI 4355).